We begin with the raw amino-acid sequence, 964 residues long: Collagen alpha-1(I) chain (964 aa).

The tract at residues 1-964 is disordered; sequence GGISVPGPMG…PGPPGPPGPP (964 aa). 4-hydroxyproline occurs at positions 18, 21, 24, 33, 36, 39, 53, 68, 74, 83, and 89. The segment covering 56-70 has biased composition (basic and acidic residues); that stretch reads NGDDGEAGKPGRPGE. 5-hydroxylysine; alternate is present on K92. O-linked (Gal...) hydroxylysine; alternate glycosylation is present at K92. At S98 the chain carries Phosphoserine. Low complexity-rich tracts occupy residues 106–117 and 126–144; these read DAGPAGPKQMGP and PGAS…TGAA. Residues P126, P147, P156, P159, P186, P189, P201, P207, P216, P222, P225, and P240 each carry the 4-hydroxyproline modification. Residues 146-158 show a composition bias toward pro residues; it reads PPGPTGPAGPPGF. The segment covering 192–231 has biased composition (low complexity); it reads AGAAGPAGNPGADGQPGAKGANGAPGIAGAPGFPGARGPS. K243 carries the post-translational modification 5-hydroxylysine. 8 positions are modified to 4-hydroxyproline: P249, P252, P260, P269, P284, P290, P299, and P305. Residues 294–303 are compositionally biased toward gly residues; sequence GERGGPGSRG. A 5-hydroxylysine modification is found at K314. P323, P332, P338, P344, P353, P356, P365, P374, P379, P391, P400, P409, P412, P430, P447, P453, P459, P465, P471, P477, P489, P498, P510, and P519 each carry 4-hydroxyproline. Residues 347–373 are compositionally biased toward low complexity; sequence KGLTGSPGSPGPDGKTGPPGPAGQDGR. The span at 381-400 shows a compositional bias: low complexity; that stretch reads ARGQAGVMGFPGPKGAAGEP. Residues 459 to 468 are compositionally biased toward low complexity; sequence PGEAGKPGEQ. K531 bears the 5-hydroxylysine mark. Residues P537, P552, and P558 each carry the 4-hydroxyproline modification. Positions 564 to 578 are enriched in low complexity; that stretch reads SGPSGPAGPTGARGA. S567 is modified (phosphoserine). Residues P579, P585, P588, P597, P603, P621, P630, and P639 each carry the 4-hydroxyproline modification. The segment covering 591-618 has biased composition (low complexity); it reads AGFAGPPGADGQPGAKGEPGDAGAKGDA. Residues 620–632 show a composition bias toward pro residues; the sequence is PPGPAGPTGPPGP. Position 642 is a 5-hydroxylysine (K642). Low complexity predominate over residues 647 to 663; it reads SAGPPGATGFPGAAGRV. 4-hydroxyproline occurs at positions 651 and 657. P665 carries the post-translational modification 3-hydroxyproline. P666, P675, P678, P704, P712, P721, P739, P748, P751, P757, P772, P778, P784, P792, and P798 each carry 4-hydroxyproline. Over residues 709 to 721 the composition is skewed to low complexity; sequence KGSPGADGPAGAP. Pro residues predominate over residues 771–781; that stretch reads PPGPMGPPGLA. A 5-hydroxylysine modification is found at K807. Over residues 815–830 the composition is skewed to pro residues; the sequence is PGPPGAPGAPGAPGPV. Residues P818, P821, and P824 each carry the 4-hydroxyproline modification. The span at 850-864 shows a compositional bias: low complexity; it reads AGPAGARGPAGPQGP. Residues 865 to 879 show a composition bias toward basic and acidic residues; that stretch reads RGDKGETGEQGDRGI. At K868 the chain carries 5-hydroxylysine. At K880 the chain carries 5-hydroxylysine; alternate. K880 carries an O-linked (Gal...) hydroxylysine; alternate glycan. 4-hydroxyproline is present on residues P895, P898, P916, and P931. Residues 898 to 931 are compositionally biased toward low complexity; it reads PGEQGPSGASGPAGPRGPPGSAGSPGKDGLNGLP. P936 is modified (3-hydroxyproline). Residue P937 is modified to 4-hydroxyproline. Positions 949 to 964 are enriched in pro residues; that stretch reads VGPPGPPGPPGPPGPP. The residue at position 951 (P951) is a 3-hydroxyproline. The residue at position 952 (P952) is a 4-hydroxyproline. 3-hydroxyproline is present on P954. P955 carries the post-translational modification 4-hydroxyproline. At P957 the chain carries 3-hydroxyproline. 3 positions are modified to 4-hydroxyproline: P958, P961, and P964.

The protein belongs to the fibrillar collagen family. In terms of assembly, trimers of one alpha 2(I) and two alpha 1(I) chains. Post-translationally, contains mostly 4-hydroxyproline. Proline residues at the third position of the tripeptide repeating unit (G-X-Y) are hydroxylated in some or all of the chains. In terms of processing, contains 3-hydroxyproline at a few sites. This modification occurs on the first proline residue in the sequence motif Gly-Pro-Hyp, where Hyp is 4-hydroxyproline. Lysine residues at the third position of the tripeptide repeating unit (G-X-Y) are 5-hydroxylated in some or all of the chains. Post-translationally, O-glycosylated on hydroxylated lysine residues. The O-linked glycan consists of a Glc-Gal disaccharide. As to expression, expressed in bones.

Its subcellular location is the secreted. It localises to the extracellular space. The protein localises to the extracellular matrix. Functionally, type I collagen is a member of group I collagen (fibrillar forming collagen). This chain is Collagen alpha-1(I) chain, found in Parocnus serus (Greater Haitian ground sloth).